The following is a 159-amino-acid chain: MKITILTVGKLKEKYWKQAIAEYEKRLSAYSKIEIIEVPDEKAPENMSDKEVEQVKEKEGQRLLAKVKQQSTVITLEIKGNMLTSEGLAKEIESRMTRGQSDFTFIIGGSNGLHKDVLDRSDYALSFSKMTFPHQMMRVILIEQVYRAFKIMRGEAYHK.

Residues Leu-76, Gly-108, and 127 to 132 contribute to the S-adenosyl-L-methionine site; that span reads FSKMTF.

This sequence belongs to the RNA methyltransferase RlmH family. In terms of assembly, homodimer.

It is found in the cytoplasm. The enzyme catalyses pseudouridine(1915) in 23S rRNA + S-adenosyl-L-methionine = N(3)-methylpseudouridine(1915) in 23S rRNA + S-adenosyl-L-homocysteine + H(+). In terms of biological role, specifically methylates the pseudouridine at position 1915 (m3Psi1915) in 23S rRNA. This chain is Ribosomal RNA large subunit methyltransferase H, found in Staphylococcus saprophyticus subsp. saprophyticus (strain ATCC 15305 / DSM 20229 / NCIMB 8711 / NCTC 7292 / S-41).